The following is an 830-amino-acid chain: Lon protease 3 (830 aa).

In terms of domain architecture, Lon N-terminal spans 19 to 213 (VPLLPLRDII…RLIELMQAEI (195 aa)). Position 367-374 (367-374 (GPPGVGKT)) interacts with ATP. In terms of domain architecture, Lon proteolytic spans 604–784 (RDEVGLVNGL…DDVLREALIL (181 aa)). Active-site residues include serine 690 and lysine 733. Low complexity predominate over residues 811–823 (PVKAPPAAAGEPT). The segment at 811-830 (PVKAPPAAAGEPTPAAPPGA) is disordered.

The protein belongs to the peptidase S16 family. In terms of assembly, homohexamer. Organized in a ring with a central cavity.

Its subcellular location is the cytoplasm. It catalyses the reaction Hydrolysis of proteins in presence of ATP.. Its function is as follows. ATP-dependent serine protease that mediates the selective degradation of mutant and abnormal proteins as well as certain short-lived regulatory proteins. Required for cellular homeostasis and for survival from DNA damage and developmental changes induced by stress. Degrades polypeptides processively to yield small peptide fragments that are 5 to 10 amino acids long. Binds to DNA in a double-stranded, site-specific manner. This chain is Lon protease 3, found in Sorangium cellulosum (strain So ce56) (Polyangium cellulosum (strain So ce56)).